We begin with the raw amino-acid sequence, 119 residues long: Beta-2-microglobulin (119 aa).

The N-terminal stretch at 1 to 20 (MARFVVVPLFVLLSLFGLEA) is a signal peptide. One can recognise an Ig-like C1-type domain in the interval 25–114 (PKIQVYSRYP…VTFSTPKTVK (90 aa)). Cysteines 45 and 100 form a disulfide.

This sequence belongs to the beta-2-microglobulin family. Heterodimer of an alpha chain and a beta chain. Beta-2-microglobulin is the beta-chain of major histocompatibility complex class I molecules.

Its subcellular location is the secreted. Component of the class I major histocompatibility complex (MHC). Involved in the presentation of peptide antigens to the immune system. This Saguinus niger (Black tamarin) protein is Beta-2-microglobulin (B2M).